A 202-amino-acid chain; its full sequence is Small ribosomal subunit protein uS4c (202 aa).

The segment at 18 to 45 (LPGLTRKMAKRKSPPGQHGAASKKPSQY) is disordered. Positions 90–152 (MRLDTTIFRL…SRSRKLIEGY (63 aa)) constitute an S4 RNA-binding domain.

Belongs to the universal ribosomal protein uS4 family. Part of the 30S ribosomal subunit. Contacts protein S5. The interaction surface between S4 and S5 is involved in control of translational fidelity.

It localises to the plastid. The protein localises to the chloroplast. One of the primary rRNA binding proteins, it binds directly to 16S rRNA where it nucleates assembly of the body of the 30S subunit. In terms of biological role, with S5 and S12 plays an important role in translational accuracy. The sequence is that of Small ribosomal subunit protein uS4c (rps4) from Nephroselmis olivacea (Green alga).